The sequence spans 340 residues: DNA-directed RNA polymerase subunit alpha (340 aa).

The interval 1–233 (MIQDEIPIPV…DLFIIFLNME (233 aa)) is alpha N-terminal domain (alpha-NTD). Positions 264-340 (AKEVAFKQIF…QLPKDQFNIS (77 aa)) are alpha C-terminal domain (alpha-CTD).

It belongs to the RNA polymerase alpha chain family. In terms of assembly, in plastids the minimal PEP RNA polymerase catalytic core is composed of four subunits: alpha, beta, beta', and beta''. When a (nuclear-encoded) sigma factor is associated with the core the holoenzyme is formed, which can initiate transcription.

It localises to the plastid. It is found in the chloroplast. The enzyme catalyses RNA(n) + a ribonucleoside 5'-triphosphate = RNA(n+1) + diphosphate. Its function is as follows. DNA-dependent RNA polymerase catalyzes the transcription of DNA into RNA using the four ribonucleoside triphosphates as substrates. The sequence is that of DNA-directed RNA polymerase subunit alpha from Psilotum nudum (Whisk fern).